A 55-amino-acid chain; its full sequence is Large ribosomal subunit protein bL33 (55 aa).

This sequence belongs to the bacterial ribosomal protein bL33 family.

The chain is Large ribosomal subunit protein bL33 from Paraburkholderia phytofirmans (strain DSM 17436 / LMG 22146 / PsJN) (Burkholderia phytofirmans).